The sequence spans 187 residues: Adenylate kinase (187 aa).

Residue 10–15 (GSGKGT) participates in ATP binding. The tract at residues 30–59 (STGDLLRSEVVAGTPLGLQAKQVMAQGDLV) is NMP. AMP contacts are provided by residues threonine 31, arginine 36, 57-59 (DLV), 85-88 (GYPR), and glutamine 92. The segment at 126 to 136 (GRAQAEGREDD) is LID. Arginine 127 is a binding site for ATP. AMP-binding residues include arginine 133 and arginine 144. An ATP-binding site is contributed by glycine 172.

This sequence belongs to the adenylate kinase family. Monomer.

It localises to the cytoplasm. The catalysed reaction is AMP + ATP = 2 ADP. It participates in purine metabolism; AMP biosynthesis via salvage pathway; AMP from ADP: step 1/1. In terms of biological role, catalyzes the reversible transfer of the terminal phosphate group between ATP and AMP. Plays an important role in cellular energy homeostasis and in adenine nucleotide metabolism. This chain is Adenylate kinase, found in Xylella fastidiosa (strain M12).